The primary structure comprises 32 residues: Putative leucine-rich repeat protein PS14 (32 aa).

In Pinus strobus (Eastern white pine), this protein is Putative leucine-rich repeat protein PS14.